The chain runs to 346 residues: SUMO-activating enzyme subunit 1 (346 aa).

Methionine 1 is modified (N-acetylmethionine). Position 2 is an N-acetylvaline; in SUMO-activating enzyme subunit 1, N-terminally processed (valine 2). Position 12 is a phosphoserine (serine 12). Lysine 198 carries the post-translational modification N6-acetyllysine.

Belongs to the ubiquitin-activating E1 family. In terms of assembly, heterodimer of SAE1 and UBA2/SAE2. The heterodimer corresponds to the two domains that are encoded on a single polypeptide chain in ubiquitin-activating enzyme E1. Interacts with UBE2I. As to expression, expression level increases during S phase and drops in G2 phase (at protein level).

The protein localises to the nucleus. Its pathway is protein modification; protein sumoylation. Its function is as follows. The heterodimer acts as an E1 ligase for SUMO1, SUMO2, SUMO3, and probably SUMO4. It mediates ATP-dependent activation of SUMO proteins followed by formation of a thioester bond between a SUMO protein and a conserved active site cysteine residue on UBA2/SAE2. This chain is SUMO-activating enzyme subunit 1 (SAE1), found in Homo sapiens (Human).